Reading from the N-terminus, the 282-residue chain is Elongation factor Ts (282 aa).

The interval Thr79 to Val82 is involved in Mg(2+) ion dislocation from EF-Tu.

This sequence belongs to the EF-Ts family.

The protein resides in the cytoplasm. Associates with the EF-Tu.GDP complex and induces the exchange of GDP to GTP. It remains bound to the aminoacyl-tRNA.EF-Tu.GTP complex up to the GTP hydrolysis stage on the ribosome. The polypeptide is Elongation factor Ts (Colwellia psychrerythraea (strain 34H / ATCC BAA-681) (Vibrio psychroerythus)).